A 324-amino-acid chain; its full sequence is Methionyl-tRNA formyltransferase (324 aa).

113 to 116 (SLLP) provides a ligand contact to (6S)-5,6,7,8-tetrahydrofolate.

Belongs to the Fmt family.

The enzyme catalyses L-methionyl-tRNA(fMet) + (6R)-10-formyltetrahydrofolate = N-formyl-L-methionyl-tRNA(fMet) + (6S)-5,6,7,8-tetrahydrofolate + H(+). Functionally, attaches a formyl group to the free amino group of methionyl-tRNA(fMet). The formyl group appears to play a dual role in the initiator identity of N-formylmethionyl-tRNA by promoting its recognition by IF2 and preventing the misappropriation of this tRNA by the elongation apparatus. The chain is Methionyl-tRNA formyltransferase from Bacteroides fragilis (strain ATCC 25285 / DSM 2151 / CCUG 4856 / JCM 11019 / LMG 10263 / NCTC 9343 / Onslow / VPI 2553 / EN-2).